The sequence spans 493 residues: MAKIMIQGTASSVGKSLIVAALCRIFKQDGYSVCPFKSQNMSLNSYITLDGKEMGRAQVLQAYAAGLEPEAYMNPILLKPTSDKKSQIIVNGKVYGNSTAMEYHNLKIKFKDMLKEQFEKLEEDFDIVVMEGAGSPAEINLRDRDIVNMGMAELVDAPVLLVGDIDKGGVFASLAGTMLLLNEGEKERVKGTIINKFRGDVEILKPGLDMLEDIIHIPCLGVVPYTRLQLEDEDGAVEFNKKAYAPIDIAVIKMPHISNFTDLDALKSEEDVSIRFVTSKEEFKEPDLLIIPGSKNTIEDLLYLRQCGLEERIKEYSREGKIIGICGGYQVLGSKIKDPYKVETDLGEIDGLNLLDMETTFEKEKVTTRVSAKLLNEETKNTVYGYEIHMGISKYGENIKPLFKIYDKNGEKVDYFDGAINEKGNVMGTYIHGVFDGVVFREKIINELRVKKGLKKKKSQMYEHMREKELDKLADIVRQSLDMEKIYSIIGMK.

In terms of domain architecture, GATase cobBQ-type spans 246 to 440 (PIDIAVIKMP…IHGVFDGVVF (195 aa)). Catalysis depends on C326, which acts as the Nucleophile. H432 is an active-site residue.

This sequence belongs to the CobB/CobQ family. CobQ subfamily.

It functions in the pathway cofactor biosynthesis; adenosylcobalamin biosynthesis. Its function is as follows. Catalyzes amidations at positions B, D, E, and G on adenosylcobyrinic A,C-diamide. NH(2) groups are provided by glutamine, and one molecule of ATP is hydrogenolyzed for each amidation. In Clostridium botulinum (strain ATCC 19397 / Type A), this protein is Cobyric acid synthase.